A 712-amino-acid chain; its full sequence is Polyribonucleotide nucleotidyltransferase (712 aa).

Aspartate 488 and aspartate 494 together coordinate Mg(2+). One can recognise a KH domain in the interval 555–614 (PKIETINIPTDKIREVIGSGGKVIREIVATTGAKVDINDDGVVKVSASDGAKIKAAIDWI). The S1 motif domain occupies 624 to 692 (GKIYDGKVVK…DRGKTKLSMK (69 aa)).

It belongs to the polyribonucleotide nucleotidyltransferase family. Mg(2+) serves as cofactor.

It is found in the cytoplasm. It catalyses the reaction RNA(n+1) + phosphate = RNA(n) + a ribonucleoside 5'-diphosphate. Involved in mRNA degradation. Catalyzes the phosphorolysis of single-stranded polyribonucleotides processively in the 3'- to 5'-direction. The polypeptide is Polyribonucleotide nucleotidyltransferase (Caulobacter vibrioides (strain NA1000 / CB15N) (Caulobacter crescentus)).